Consider the following 141-residue polypeptide: Large ribosomal subunit protein uL11 (141 aa).

It belongs to the universal ribosomal protein uL11 family. In terms of assembly, part of the ribosomal stalk of the 50S ribosomal subunit. Interacts with L10 and the large rRNA to form the base of the stalk. L10 forms an elongated spine to which L12 dimers bind in a sequential fashion forming a multimeric L10(L12)X complex. In terms of processing, one or more lysine residues are methylated.

Its function is as follows. Forms part of the ribosomal stalk which helps the ribosome interact with GTP-bound translation factors. The chain is Large ribosomal subunit protein uL11 from Lactiplantibacillus plantarum (strain ATCC BAA-793 / NCIMB 8826 / WCFS1) (Lactobacillus plantarum).